Consider the following 67-residue polypeptide: DNA-directed RNA polymerase subunit omega (67 aa).

It belongs to the RNA polymerase subunit omega family. In terms of assembly, the RNAP catalytic core consists of 2 alpha, 1 beta, 1 beta' and 1 omega subunit. When a sigma factor is associated with the core the holoenzyme is formed, which can initiate transcription.

It carries out the reaction RNA(n) + a ribonucleoside 5'-triphosphate = RNA(n+1) + diphosphate. Promotes RNA polymerase assembly. Latches the N- and C-terminal regions of the beta' subunit thereby facilitating its interaction with the beta and alpha subunits. The polypeptide is DNA-directed RNA polymerase subunit omega (Listeria monocytogenes serotype 4a (strain HCC23)).